An 88-amino-acid chain; its full sequence is Prolevitide (88 aa).

Residues M1–A20 form the signal peptide. Q74 carries the pyrrolidone carboxylic acid modification. Q87 carries the post-translational modification Glutamine amide.

It belongs to the gastrin/cholecystokinin family. As to expression, expressed by the skin glands.

The protein resides in the secreted. In Xenopus laevis (African clawed frog), this protein is Prolevitide.